The chain runs to 965 residues: Aminopeptidase N (965 aa).

Residues 2–8 (AKGFYIS) lie on the Cytoplasmic side of the membrane. The chain crosses the membrane as a helical; Signal-anchor for type II membrane protein span at residues 9–32 (KTLGILGILLGVAAVCTIIALSVV). The segment at 33-68 (YAQEKNRNAENSAIAPTLPGSTSATTSTTNPAIDES) is cytosolic Ser/Thr-rich junction. The Extracellular segment spans residues 33 to 965 (YAQEKNRNAE…VVLKWFTENS (933 aa)). Positions 44–68 (SAIAPTLPGSTSATTSTTNPAIDES) are disordered. Low complexity predominate over residues 47 to 64 (APTLPGSTSATTSTTNPA). The metalloprotease stretch occupies residues 69-965 (KPWNQYRLPK…VVLKWFTENS (897 aa)). N-linked (GlcNAc...) asparagine glycans are attached at residues asparagine 114 and asparagine 128. Tyrosine 176 is modified (sulfotyrosine). 3 N-linked (GlcNAc...) asparagine glycosylation sites follow: asparagine 234, asparagine 242, and asparagine 264. Substrate is bound at residue 351–355 (GAMEN). Position 387 (histidine 387) interacts with Zn(2+). Glutamate 388 (proton acceptor) is an active-site residue. 2 residues coordinate Zn(2+): histidine 391 and glutamate 410. N-linked (GlcNAc...) asparagine glycans are attached at residues asparagine 555, asparagine 606, and asparagine 624. A disulfide bond links cysteine 760 and cysteine 767. N-linked (GlcNAc...) asparagine glycosylation is present at asparagine 780. A disulfide bond links cysteine 797 and cysteine 833. Phosphotyrosine is present on tyrosine 852.

The protein belongs to the peptidase M1 family. As to quaternary structure, homodimer. Interacts with SLC6A19. Requires Zn(2+) as cofactor. Post-translationally, sulfated. N- and O-glycosylated. In terms of processing, may undergo proteolysis and give rise to a soluble form. In terms of tissue distribution, widely distributed throughout the CNS. Particularly abundant in kidney and intestinal microvilli, also detected in lung and liver. Weakly expressed in heart and aorta.

It is found in the cell membrane. It catalyses the reaction Release of an N-terminal amino acid, Xaa-|-Yaa- from a peptide, amide or arylamide. Xaa is preferably Ala, but may be most amino acids including Pro (slow action). When a terminal hydrophobic residue is followed by a prolyl residue, the two may be released as an intact Xaa-Pro dipeptide.. Functionally, broad specificity aminopeptidase which plays a role in the final digestion of peptides generated from hydrolysis of proteins by gastric and pancreatic proteases. Also involved in the processing of various peptides including peptide hormones, such as angiotensin III and IV, neuropeptides, and chemokines. May also be involved the cleavage of peptides bound to major histocompatibility complex class II molecules of antigen presenting cells. May have a role in angiogenesis and promote cholesterol crystallization. May have a role in amino acid transport by acting as binding partner of amino acid transporter SLC6A19 and regulating its activity. This chain is Aminopeptidase N (Anpep), found in Rattus norvegicus (Rat).